A 470-amino-acid chain; its full sequence is Aminodeoxychorismate synthase component 1 (470 aa).

This sequence belongs to the anthranilate synthase component I family. Monomer. Heterodimer consisting of two non-identical subunits: a glutamine amidotransferase subunit (PabA) and a aminodeoxychorismate synthase subunit (PabB). Mg(2+) serves as cofactor.

The catalysed reaction is chorismate + L-glutamine = 4-amino-4-deoxychorismate + L-glutamate. Its pathway is cofactor biosynthesis; tetrahydrofolate biosynthesis; 4-aminobenzoate from chorismate: step 1/2. Its function is as follows. Part of a heterodimeric complex that catalyzes the two-step biosynthesis of 4-amino-4-deoxychorismate (ADC), a precursor of p-aminobenzoate (PABA) and tetrahydrofolate. In the first step, a glutamine amidotransferase (PabA) generates ammonia as a substrate that, along with chorismate, is used in the second step, catalyzed by aminodeoxychorismate synthase (PabB) to produce ADC. The protein is Aminodeoxychorismate synthase component 1 (pabB) of Bacillus subtilis (strain 168).